We begin with the raw amino-acid sequence, 943 residues long: Isoleucine--tRNA ligase (943 aa).

The 'HIGH' region motif lies at 59-69 (PYANGQIHLGH). An L-isoleucyl-5'-AMP-binding site is contributed by E577. A 'KMSKS' region motif is present at residues 618 to 622 (KMSKS). K621 is a binding site for ATP. Zn(2+) contacts are provided by C906, C909, C926, and C929.

This sequence belongs to the class-I aminoacyl-tRNA synthetase family. IleS type 1 subfamily. As to quaternary structure, monomer. It depends on Zn(2+) as a cofactor.

Its subcellular location is the cytoplasm. The enzyme catalyses tRNA(Ile) + L-isoleucine + ATP = L-isoleucyl-tRNA(Ile) + AMP + diphosphate. Catalyzes the attachment of isoleucine to tRNA(Ile). As IleRS can inadvertently accommodate and process structurally similar amino acids such as valine, to avoid such errors it has two additional distinct tRNA(Ile)-dependent editing activities. One activity is designated as 'pretransfer' editing and involves the hydrolysis of activated Val-AMP. The other activity is designated 'posttransfer' editing and involves deacylation of mischarged Val-tRNA(Ile). In Xanthomonas campestris pv. campestris (strain 8004), this protein is Isoleucine--tRNA ligase.